Consider the following 486-residue polypeptide: Probable glycine dehydrogenase (decarboxylating) subunit 2 (486 aa).

Lysine 269 is subject to N6-(pyridoxal phosphate)lysine.

The protein belongs to the GcvP family. C-terminal subunit subfamily. In terms of assembly, the glycine cleavage system is composed of four proteins: P, T, L and H. In this organism, the P 'protein' is a heterodimer of two subunits. Requires pyridoxal 5'-phosphate as cofactor.

The catalysed reaction is N(6)-[(R)-lipoyl]-L-lysyl-[glycine-cleavage complex H protein] + glycine + H(+) = N(6)-[(R)-S(8)-aminomethyldihydrolipoyl]-L-lysyl-[glycine-cleavage complex H protein] + CO2. Its function is as follows. The glycine cleavage system catalyzes the degradation of glycine. The P protein binds the alpha-amino group of glycine through its pyridoxal phosphate cofactor; CO(2) is released and the remaining methylamine moiety is then transferred to the lipoamide cofactor of the H protein. This chain is Probable glycine dehydrogenase (decarboxylating) subunit 2, found in Chlorobium phaeobacteroides (strain DSM 266 / SMG 266 / 2430).